Consider the following 764-residue polypeptide: Acylamino-acid-releasing enzyme (764 aa).

Residues S618, D707, and H739 each act as charge relay system in the active site.

Belongs to the peptidase S9C family. Homotetramer.

The protein localises to the cytoplasm. Its subcellular location is the nucleus. It carries out the reaction Cleavage of an N-acetyl or N-formyl amino acid from the N-terminus of a polypeptide.. Strongly inhibited by the serine protease inhibitor diisopropyl fluorophosphate. Catalyzes the hydrolysis of the N-terminal peptide bond of an N-acetylated peptide to generate an N-acetylated amino acid and a peptide with a free N-terminus. Can degrade the glycated RuBisCO (ribulose-1,5-bisphosphate carboxylase/oxygenase) protein but not the native protein. May be involved in the elimination of glycated proteins. Plays a homeostatic role in sustaining the cytoplasmic antioxidative system. May contribute to the elimination of the oxidized proteins in the cytoplasm. This chain is Acylamino-acid-releasing enzyme, found in Arabidopsis thaliana (Mouse-ear cress).